Reading from the N-terminus, the 1134-residue chain is Nck-associated protein 1-like (1134 aa).

A disordered region spans residues Lys-638 to Ser-671. Residues Ala-639 to Pro-651 show a composition bias toward basic residues. Residues Arg-652–His-666 show a composition bias toward basic and acidic residues. The chain crosses the membrane as a helical span at residues Leu-999–Phe-1019.

In hematopoietic cells, component of the WAVE2 complex composed of ABI1, CYFIP1/SRA1, NCKAP1L/HEM1 and WASF2/WAVE2. Interacts with ARHGAP4, PIK3C3/VPS34 and PPP1R12A/MYPT1. Interacts with mammalian target of rapamycin complex 2 (mTORC2) components, including MTOR and RICTOR. As to expression, predominantly expressed in developing and mature hematopoietic cells. Also detected in urogenital tissues, including testis.

It localises to the membrane. The protein localises to the cytoplasm. Functionally, essential hematopoietic-specific regulator of the actin cytoskeleton. Controls lymphocyte development, activation, proliferation and homeostasis, erythrocyte membrane stability, as well as phagocytosis and migration by neutrophils and macrophages. Component of the WAVE2 complex which signals downstream of RAC to stimulate F-actin polymerization. Required for stabilization and/or translation of the WAVE2 complex proteins in hematopoietic cells. Within the WAVE2 complex, enables the cortical actin network to restrain excessive degranulation and granule release by T-cells. Required for efficient T-lymphocyte and neutrophil migration. Exhibits complex cycles of activation and inhibition to generate waves of propagating the assembly with actin. Also involved in mechanisms WAVE independent to regulate myosin and actin polymerization during neutrophil chemotaxis. In T-cells, required for proper mechanistic target of rapamycin complex 2 (mTORC2)-dependent AKT phosphorylation, cell proliferation and cytokine secretion, including that of IL2 and TNF. The chain is Nck-associated protein 1-like from Mus musculus (Mouse).